Reading from the N-terminus, the 527-residue chain is Bifunctional purine biosynthesis protein PurH (527 aa).

Residues 9–156 (MARKPIRRAL…KNHPSVAVVT (148 aa)) enclose the MGS-like domain.

The protein belongs to the PurH family.

It catalyses the reaction (6R)-10-formyltetrahydrofolate + 5-amino-1-(5-phospho-beta-D-ribosyl)imidazole-4-carboxamide = 5-formamido-1-(5-phospho-D-ribosyl)imidazole-4-carboxamide + (6S)-5,6,7,8-tetrahydrofolate. It carries out the reaction IMP + H2O = 5-formamido-1-(5-phospho-D-ribosyl)imidazole-4-carboxamide. The protein operates within purine metabolism; IMP biosynthesis via de novo pathway; 5-formamido-1-(5-phospho-D-ribosyl)imidazole-4-carboxamide from 5-amino-1-(5-phospho-D-ribosyl)imidazole-4-carboxamide (10-formyl THF route): step 1/1. It functions in the pathway purine metabolism; IMP biosynthesis via de novo pathway; IMP from 5-formamido-1-(5-phospho-D-ribosyl)imidazole-4-carboxamide: step 1/1. This Mycobacterium leprae (strain Br4923) protein is Bifunctional purine biosynthesis protein PurH.